The primary structure comprises 215 residues: MVSLEARVREVKGKREARRLRRSGEVPAVVYGPATEPIPVKIKRSVLEKIFHTISEATPIQLIIKDDQGNTVAEKTVFLKMVQRDKVSETVVHLDFYEPTKGHRMRINVPLKVVGKPVGVEKGGFLEVFHEEIPVETDPDKVPQEIEVDVSSLDLGDVIHARDLKLPEGVKCLLEEEEAVVSVLVPKEVAIEEATEEEEEAAEPEVIKRKEEEEE.

The segment covering 192–203 (EEATEEEEEAAE) has biased composition (acidic residues). The interval 192 to 215 (EEATEEEEEAAEPEVIKRKEEEEE) is disordered. A compositionally biased stretch (basic and acidic residues) spans 205–215 (EVIKRKEEEEE).

Belongs to the bacterial ribosomal protein bL25 family. CTC subfamily. As to quaternary structure, part of the 50S ribosomal subunit; part of the 5S rRNA/L5/L18/L25 subcomplex. Contacts the 5S rRNA. Binds to the 5S rRNA independently of L5 and L18.

Its function is as follows. This is one of the proteins that binds to the 5S RNA in the ribosome where it forms part of the central protuberance. The chain is Large ribosomal subunit protein bL25 from Thermotoga sp. (strain RQ2).